A 78-amino-acid chain; its full sequence is Protein SlyX homolog (78 aa).

It belongs to the SlyX family.

The sequence is that of Protein SlyX homolog from Xylella fastidiosa (strain 9a5c).